Consider the following 553-residue polypeptide: Protein YloV (553 aa).

The DhaL domain maps to 9-201 (RTFAEMILAG…LLCVYEGFLA (193 aa)).

This is Protein YloV (yloV) from Bacillus subtilis (strain 168).